The primary structure comprises 295 residues: Phosphatidylserine decarboxylase proenzyme (295 aa).

Catalysis depends on charge relay system; for autoendoproteolytic cleavage activity residues aspartate 90 and serine 258. The active-site Schiff-base intermediate with substrate; via pyruvic acid; for decarboxylase activity is the serine 258. The residue at position 258 (serine 258) is a Pyruvic acid (Ser); by autocatalysis.

Belongs to the phosphatidylserine decarboxylase family. PSD-B subfamily. Prokaryotic type I sub-subfamily. In terms of assembly, heterodimer of a large membrane-associated beta subunit and a small pyruvoyl-containing alpha subunit. Pyruvate serves as cofactor. Is synthesized initially as an inactive proenzyme. Formation of the active enzyme involves a self-maturation process in which the active site pyruvoyl group is generated from an internal serine residue via an autocatalytic post-translational modification. Two non-identical subunits are generated from the proenzyme in this reaction, and the pyruvate is formed at the N-terminus of the alpha chain, which is derived from the carboxyl end of the proenzyme. The autoendoproteolytic cleavage occurs by a canonical serine protease mechanism, in which the side chain hydroxyl group of the serine supplies its oxygen atom to form the C-terminus of the beta chain, while the remainder of the serine residue undergoes an oxidative deamination to produce ammonia and the pyruvoyl prosthetic group on the alpha chain. During this reaction, the Ser that is part of the protease active site of the proenzyme becomes the pyruvoyl prosthetic group, which constitutes an essential element of the active site of the mature decarboxylase.

The protein resides in the cell membrane. The enzyme catalyses a 1,2-diacyl-sn-glycero-3-phospho-L-serine + H(+) = a 1,2-diacyl-sn-glycero-3-phosphoethanolamine + CO2. The protein operates within phospholipid metabolism; phosphatidylethanolamine biosynthesis; phosphatidylethanolamine from CDP-diacylglycerol: step 2/2. In terms of biological role, catalyzes the formation of phosphatidylethanolamine (PtdEtn) from phosphatidylserine (PtdSer). This is Phosphatidylserine decarboxylase proenzyme from Blochmanniella pennsylvanica (strain BPEN).